Here is a 71-residue protein sequence, read N- to C-terminus: Large ribosomal subunit protein bL31 (71 aa).

Zn(2+) contacts are provided by Cys16, Cys18, Cys37, and Cys40.

Belongs to the bacterial ribosomal protein bL31 family. Type A subfamily. Part of the 50S ribosomal subunit. Zn(2+) serves as cofactor.

In terms of biological role, binds the 23S rRNA. This chain is Large ribosomal subunit protein bL31, found in Actinobacillus succinogenes (strain ATCC 55618 / DSM 22257 / CCUG 43843 / 130Z).